A 109-amino-acid chain; its full sequence is Fluoride-specific ion channel FluC (109 aa).

3 helical membrane-spanning segments follow: residues 21-41, 52-72, and 84-104; these read LTLN…GFFV, ILFS…YFLY, and IIFF…GFWI.

Belongs to the fluoride channel Fluc/FEX (TC 1.A.43) family.

It localises to the cell inner membrane. The catalysed reaction is fluoride(in) = fluoride(out). Its function is as follows. Fluoride-specific ion channel. Important for reducing fluoride concentration in the cell, thus reducing its toxicity. The polypeptide is Fluoride-specific ion channel FluC (Prochlorococcus marinus (strain MIT 9301)).